We begin with the raw amino-acid sequence, 68 residues long: MAPAAAPSSLAVRASSPAATPTSYGVFCKGLSRTLLAFFELAWQLRMNFPYFYVAGSVILNIRLQVHI.

The disordered stretch occupies residues 1 to 21; the sequence is MAPAAAPSSLAVRASSPAATP.

This Homo sapiens (Human) protein is Small integral membrane protein 10-like protein 1.